The chain runs to 783 residues: Tricorn protease-interacting factor F2 (783 aa).

Substrate contacts are provided by residues E107 and 236 to 240 (GAMEN). Zn(2+) is bound at residue H271. The Proton acceptor role is filled by E272. The Zn(2+) site is built by H275 and E294.

This sequence belongs to the peptidase M1 family. In terms of assembly, monomer. Part of the Tricorn proteolytic complex. Zn(2+) is required as a cofactor.

The protein resides in the cytoplasm. Proteases F1, F2 and F3 degrade oligopeptides produced by Tricorn (themselves probably produced by the proteasome), yielding free amino acids. The protein is Tricorn protease-interacting factor F2 (trf2) of Thermoplasma acidophilum (strain ATCC 25905 / DSM 1728 / JCM 9062 / NBRC 15155 / AMRC-C165).